A 209-amino-acid chain; its full sequence is Large ribosomal subunit protein uL3 (209 aa).

This sequence belongs to the universal ribosomal protein uL3 family. In terms of assembly, part of the 50S ribosomal subunit. Forms a cluster with proteins L14 and L19.

One of the primary rRNA binding proteins, it binds directly near the 3'-end of the 23S rRNA, where it nucleates assembly of the 50S subunit. The polypeptide is Large ribosomal subunit protein uL3 (Oceanobacillus iheyensis (strain DSM 14371 / CIP 107618 / JCM 11309 / KCTC 3954 / HTE831)).